Consider the following 399-residue polypeptide: [Pyruvate dehydrogenase (acetyl-transferring)] kinase, mitochondrial (399 aa).

The N-terminal 18 residues, Met-1–Lys-18, are a transit peptide targeting the mitochondrion. The region spanning Val-123–Pro-360 is the Histidine kinase domain. Residues Glu-247–Arg-254, Asp-286, Ser-305–Thr-306, and Gly-321–Leu-326 each bind ATP.

It belongs to the PDK/BCKDK protein kinase family.

The protein resides in the mitochondrion matrix. The enzyme catalyses L-seryl-[pyruvate dehydrogenase E1 alpha subunit] + ATP = O-phospho-L-seryl-[pyruvate dehydrogenase E1 alpha subunit] + ADP + H(+). Inhibits the mitochondrial pyruvate dehydrogenase complex by phosphorylation of the E1 alpha subunit, thus contributing to the regulation of glucose metabolism. This chain is [Pyruvate dehydrogenase (acetyl-transferring)] kinase, mitochondrial, found in Ascaris suum (Pig roundworm).